Here is a 160-residue protein sequence, read N- to C-terminus: 6,7-dimethyl-8-ribityllumazine synthase (160 aa).

5-amino-6-(D-ribitylamino)uracil contacts are provided by residues F22, 57 to 59 (TYE), and 81 to 83 (TII). (2S)-2-hydroxy-3-oxobutyl phosphate is bound at residue 86 to 87 (QT). H89 (proton donor) is an active-site residue. L114 is a binding site for 5-amino-6-(D-ribitylamino)uracil. Residue R128 participates in (2S)-2-hydroxy-3-oxobutyl phosphate binding.

It belongs to the DMRL synthase family. In terms of assembly, forms an icosahedral capsid composed of 60 subunits, arranged as a dodecamer of pentamers.

It catalyses the reaction (2S)-2-hydroxy-3-oxobutyl phosphate + 5-amino-6-(D-ribitylamino)uracil = 6,7-dimethyl-8-(1-D-ribityl)lumazine + phosphate + 2 H2O + H(+). It participates in cofactor biosynthesis; riboflavin biosynthesis; riboflavin from 2-hydroxy-3-oxobutyl phosphate and 5-amino-6-(D-ribitylamino)uracil: step 1/2. Functionally, catalyzes the formation of 6,7-dimethyl-8-ribityllumazine by condensation of 5-amino-6-(D-ribitylamino)uracil with 3,4-dihydroxy-2-butanone 4-phosphate. This is the penultimate step in the biosynthesis of riboflavin. This chain is 6,7-dimethyl-8-ribityllumazine synthase, found in Buchnera aphidicola subsp. Acyrthosiphon pisum (strain APS) (Acyrthosiphon pisum symbiotic bacterium).